Consider the following 428-residue polypeptide: Glutamate-1-semialdehyde 2,1-aminomutase (428 aa).

Position 265 is an N6-(pyridoxal phosphate)lysine (Lys-265).

Belongs to the class-III pyridoxal-phosphate-dependent aminotransferase family. HemL subfamily. As to quaternary structure, homodimer. Requires pyridoxal 5'-phosphate as cofactor.

The protein localises to the cytoplasm. The catalysed reaction is (S)-4-amino-5-oxopentanoate = 5-aminolevulinate. It functions in the pathway porphyrin-containing compound metabolism; protoporphyrin-IX biosynthesis; 5-aminolevulinate from L-glutamyl-tRNA(Glu): step 2/2. The chain is Glutamate-1-semialdehyde 2,1-aminomutase from Proteus mirabilis (strain HI4320).